The primary structure comprises 459 residues: Glutamyl-tRNA(Gln) amidotransferase subunit A, mitochondrial (459 aa).

Residues Lys37 and Ser114 each act as charge relay system in the active site. Ser138 acts as the Acyl-ester intermediate in catalysis.

Belongs to the amidase family. GatA subfamily. Subunit of the heterotrimeric GatFAB amidotransferase (AdT) complex, composed of A, B and F subunits.

The protein resides in the mitochondrion. It carries out the reaction L-glutamyl-tRNA(Gln) + L-glutamine + ATP + H2O = L-glutaminyl-tRNA(Gln) + L-glutamate + ADP + phosphate + H(+). Allows the formation of correctly charged Gln-tRNA(Gln) through the transamidation of misacylated Glu-tRNA(Gln) in the mitochondria. The reaction takes place in the presence of glutamine and ATP through an activated gamma-phospho-Glu-tRNA(Gln). This is Glutamyl-tRNA(Gln) amidotransferase subunit A, mitochondrial from Yarrowia lipolytica (strain CLIB 122 / E 150) (Yeast).